A 74-amino-acid chain; its full sequence is Large ribosomal subunit protein bL31 (74 aa).

Zn(2+) is bound by residues Cys16, Cys18, Cys38, and Cys41.

It belongs to the bacterial ribosomal protein bL31 family. Type A subfamily. In terms of assembly, part of the 50S ribosomal subunit. It depends on Zn(2+) as a cofactor.

Functionally, binds the 23S rRNA. In Salinispora tropica (strain ATCC BAA-916 / DSM 44818 / JCM 13857 / NBRC 105044 / CNB-440), this protein is Large ribosomal subunit protein bL31.